Reading from the N-terminus, the 409-residue chain is Failed axon connections homolog (409 aa).

Residues 68–88 (YLTGGALLAAAAYLLHELLVI) traverse the membrane as a helical segment. Residues 372-393 (DEGAENSFSRTPDTDFTGHSLF) form a disordered region.

Belongs to the FAX family.

The protein resides in the membrane. In terms of biological role, may play a role in axonal development. This Mus musculus (Mouse) protein is Failed axon connections homolog (Faxc).